Reading from the N-terminus, the 197-residue chain is Protein FAM219B (197 aa).

Disordered regions lie at residues 1-77 (MATE…HRDH) and 117-142 (DENLVSLDSDSDGELESRYSSGYSSA). A phosphoserine mark is found at serine 14, serine 125, and serine 127.

The protein belongs to the FAM219 family.

The polypeptide is Protein FAM219B (Fam219b) (Mus musculus (Mouse)).